Consider the following 1447-residue polypeptide: Bud site selection protein 4 (1447 aa).

Residues 1–16 show a composition bias toward basic and acidic residues; the sequence is MHDAESTVDSLLKEID. 2 disordered regions span residues 1–37 and 57–76; these read MHDA…TPHN and NTRS…KMST. A Phosphoserine modification is found at Ser-10. 2 stretches are compositionally biased toward polar residues: residues 22 to 32 and 59 to 76; these read TKSNITQNGSE and RSNA…KMST. Residues Ser-78, Ser-81, Ser-91, Ser-96, and Ser-167 each carry the phosphoserine modification. Positions 272–316 are disordered; the sequence is NLPSKLLNTSNNSHSDSRSPTASVEDLNISTNLPGADSSQNNPVT. Positions 277–316 are enriched in polar residues; that stretch reads LLNTSNNSHSDSRSPTASVEDLNISTNLPGADSSQNNPVT. The residue at position 365 (Thr-365) is a Phosphothreonine. Ser-367 is subject to Phosphoserine. Residues 444 to 588 are disordered; sequence HQESEHANEQ…VEENEESEHV (145 aa). A compositionally biased stretch (basic and acidic residues) spans 475-494; the sequence is EFQRNSKDGEEYRIVQHEES. Residues 497 to 509 are compositionally biased toward polar residues; that stretch reads GQRTKSSEENIIN. Phosphoserine is present on Ser-511. Polar residues predominate over residues 538–548; it reads SSSCEDQSVSE. Residues 549–580 are compositionally biased toward basic and acidic residues; it reads ARNKDSIEEKEVETKDENIETEKDESEYHKVE. Ser-616 is modified (phosphoserine). Residues 649-664 are compositionally biased toward polar residues; sequence NSQFSQQSSITTASTV. The segment at 649–672 is disordered; it reads NSQFSQQSSITTASTVDSKKDNGS. The tract at residues 768–879 is interaction with IQG1; the sequence is EHENIPLSTH…SLWESSYELK (112 aa). A phosphoserine mark is found at Ser-805 and Ser-811. A PH domain is found at 1302–1413; that stretch reads NIYKEGYLLQ…WYNKLQEVVE (112 aa).

It belongs to the BUD4 family. Interacts with AXL1, IQG1 and SEC3. Phosphorylated by CDC28.

The protein localises to the bud neck. In terms of biological role, required for establishment of the axial budding pattern in haploid cells. Cooperates with other bud site selection proteins to recognize a spatial landmark during mitosis and they subsequently become a landmark for downstream polarity establishment factors that coordinate axial budding and cytokinesis. Involved in the septin organization at the bud neck. This Saccharomyces cerevisiae (strain YJM789) (Baker's yeast) protein is Bud site selection protein 4 (BUD4).